A 28-amino-acid chain; its full sequence is Chassatide C12 (28 aa).

Positions 1 to 28 (EYCGESCYLIPCFTPGCYCVSRQCVNKN) form a cross-link, cyclopeptide (Glu-Asn). Disulfide bonds link Cys-3-Cys-17, Cys-7-Cys-19, and Cys-12-Cys-24.

In terms of processing, this is a cyclic peptide. In terms of tissue distribution, expressed in fruit, pedicel, leaf and stem but not in root (at protein level).

Its function is as follows. Probably participates in a plant defense mechanism. The protein is Chassatide C12 of Chassalia chartacea (Chassalia curviflora).